Here is a 224-residue protein sequence, read N- to C-terminus: Small ribosomal subunit protein uS3 (224 aa).

Residues 38–106 (LREFVKEKLG…EVYLNVVEVR (69 aa)) enclose the KH type-2 domain.

It belongs to the universal ribosomal protein uS3 family. In terms of assembly, part of the 30S ribosomal subunit. Forms a tight complex with proteins S10 and S14.

Functionally, binds the lower part of the 30S subunit head. Binds mRNA in the 70S ribosome, positioning it for translation. The chain is Small ribosomal subunit protein uS3 from Anaeromyxobacter dehalogenans (strain 2CP-1 / ATCC BAA-258).